A 416-amino-acid chain; its full sequence is Enterobactin exporter EntS (416 aa).

The Cytoplasmic segment spans residues 1 to 21; sequence MNKQSWLLNLSLLKTHPAFRA. A helical membrane pass occupies residues 22-42; that stretch reads VFLARFISIVSLGLLGVAVPV. Residues 43-55 are Periplasmic-facing; sequence QIQMMTHSTWQVG. The helical transmembrane segment at 56-76 threads the bilayer; it reads LSVTLTGGAMFVGLMVGGVLA. The Cytoplasmic portion of the chain corresponds to 77 to 83; the sequence is DRYERKK. Residues 84–104 traverse the membrane as a helical segment; that stretch reads VILLARGTCGIGFIGLCLNAL. Topologically, residues 105–109 are periplasmic; the sequence is LPEPS. A helical transmembrane segment spans residues 110 to 130; the sequence is LLAIYLLGLWDGFFASLGVTA. Topologically, residues 131–156 are cytoplasmic; sequence LLAATPALVGRENLMQAGAITMLTVR. A helical membrane pass occupies residues 157 to 177; the sequence is LGSVISPMIGGLLLATGGVAW. N178 is a topological domain (periplasmic). The helical transmembrane segment at 179–199 threads the bilayer; sequence YGLAAAGTFITLLPLLSLPAL. Residues 200–218 are Cytoplasmic-facing; sequence PPPPQPREHPLKSLLAGFR. A helical transmembrane segment spans residues 219-239; sequence FLLASPLVGGIALLGGLLTMA. The Periplasmic segment spans residues 240–256; the sequence is SAVRVLYPALADNWQMS. A helical membrane pass occupies residues 257-277; it reads AAQIGFLYAAIPLGAAIGALT. Topologically, residues 278–287 are cytoplasmic; it reads SGKLAHSARP. A helical membrane pass occupies residues 288 to 307; it reads GLLMLLSTLGSFLAIGLFGL. Residues 308-313 lie on the Periplasmic side of the membrane; it reads MPMWIL. Residues 314–336 form a helical membrane-spanning segment; the sequence is GVVCLALFGWLSAVSSLLQYTML. Over 337–356 the chain is Cytoplasmic; sequence QTQTPEAMLGRINGLWTAQN. The chain crosses the membrane as a helical span at residues 357 to 377; sequence VTGDAIGAALLGGLGAMMTPV. Residue A378 is a topological domain, periplasmic. The helical transmembrane segment at 379 to 399 threads the bilayer; it reads SASASGFGLLIIGVLLLLVLV. The Cytoplasmic segment spans residues 400 to 416; that stretch reads ELRRFRQTPPQMTASDS.

This sequence belongs to the major facilitator superfamily. EntS (TC 2.A.1.38) family.

It localises to the cell inner membrane. Its function is as follows. Component of an export pathway for enterobactin. This chain is Enterobactin exporter EntS, found in Escherichia coli O7:K1 (strain IAI39 / ExPEC).